Here is a 715-residue protein sequence, read N- to C-terminus: Protein sneaky (715 aa).

Residues 1 to 32 lie on the Cytoplasmic side of the membrane; sequence MLSLLTRPFLPIFCFLYGPQSEGSTRIQCLRR. The chain crosses the membrane as a helical span at residues 33–53; sequence FVTFLLGLVLGFLLWKLAALN. The Extracellular segment spans residues 54-66; it reads FTLGRLFVNGATD. Residues 67 to 87 form a helical membrane-spanning segment; it reads LYVFIIFVLVTGTIFMLSLPV. At 88-109 the chain is on the cytoplasmic side; that stretch reads RAVILLIFVALVGKSGRTYLRA. Residues 110–130 form a helical membrane-spanning segment; that stretch reads VAFAFIISGPIANLVENAGEV. Topologically, residues 131-373 are extracellular; that stretch reads ARVFVCTTVL…FERQKRIFNK (243 aa). A helical membrane pass occupies residues 374-394; the sequence is VMGILQKILCLFMLRMVYVSI. The Cytoplasmic segment spans residues 395-457; it reads NYYVKYLNDV…FSRTHHESTT (63 aa). A helical membrane pass occupies residues 458–478; sequence VCFNLLQFLLELVTAGLFILI. Over 479-553 the chain is Extracellular; sequence DHLVVELLQI…NAHVLPKKMY (75 aa). Residues 554 to 574 traverse the membrane as a helical segment; the sequence is YQLILLYLIIIVLIYQSTTFL. Over 575 to 715 the chain is Cytoplasmic; the sequence is RMRRVICSFF…VEVYTYRKEK (141 aa). The RING-type; degenerate zinc-finger motif lies at 655 to 691; the sequence is CMICRGLEDSTFTVCGNCGLPYCDDCAEDLNSVCFQC.

In terms of tissue distribution, specifically expressed in testis.

The protein resides in the cytoplasmic vesicle. Its subcellular location is the secretory vesicle. It is found in the acrosome membrane. It localises to the cytoplasm. The protein localises to the cytoplasmic vesicle membrane. Component of the sperm acrosome membrane. Required for breakdown of the sperm plasma membrane after sperm entry into the egg, which is an essential prerequisite for successful fertilization. The polypeptide is Protein sneaky (Drosophila melanogaster (Fruit fly)).